Here is a 701-residue protein sequence, read N- to C-terminus: Elongation factor G 1 (701 aa).

A tr-type G domain is found at 5-281 (SKYRNIGIFA…AVVDYLPSPT (277 aa)). Residues 14–21 (AHVDAGKT), 78–82 (DTPGH), and 132–135 (NKLD) each bind GTP.

The protein belongs to the TRAFAC class translation factor GTPase superfamily. Classic translation factor GTPase family. EF-G/EF-2 subfamily.

The protein resides in the cytoplasm. Functionally, catalyzes the GTP-dependent ribosomal translocation step during translation elongation. During this step, the ribosome changes from the pre-translocational (PRE) to the post-translocational (POST) state as the newly formed A-site-bound peptidyl-tRNA and P-site-bound deacylated tRNA move to the P and E sites, respectively. Catalyzes the coordinated movement of the two tRNA molecules, the mRNA and conformational changes in the ribosome. The sequence is that of Elongation factor G 1 from Colwellia psychrerythraea (strain 34H / ATCC BAA-681) (Vibrio psychroerythus).